The primary structure comprises 147 residues: VELTEAQRGAIVNLWGHLSPDEIGPQALARLLIVYPWTQRYFASFGNISSAAAIMGNPKVAAHGKVVVGALDKAVKNLNNIKGTYAALSTIHSEKLHVDPDNFRLLAESFTVSVAMKLGPSGFNAETQHALAKFLAEVVSALGKQYH.

Positions 2–147 constitute a Globin domain; it reads ELTEAQRGAI…VVSALGKQYH (146 aa). His63 and His92 together coordinate heme b.

Belongs to the globin family. In terms of assembly, heterotetramer of two alpha chains and two beta chains. In terms of tissue distribution, red blood cells.

In terms of biological role, involved in oxygen transport from gills to the various peripheral tissues. This is Hemoglobin subunit beta (hbb) from Electrophorus electricus (Electric eel).